The chain runs to 84 residues: MFTLKKPLLLIVLLGIISLSLCEQERAADEDEGSEIKRGIFSKFAGKGIKNLLVKGVKNIGKEVGMDVIRTGIDIAGCKIKGEC.

A signal peptide spans 1–22; the sequence is MFTLKKPLLLIVLLGIISLSLC. Positions 23–36 are cleaved as a propeptide — removed in mature form; sequence EQERAADEDEGSEI. An intrachain disulfide couples Cys-78 to Cys-84.

Expressed by the skin glands.

The protein localises to the secreted. Has antimicrobial activity against Gram-negative bacterium E.coli ATCC 8739 (MIC=6.3 ug), against Gram positive bacteria S.aureus ATCC 6538 (MIC=3.1 ug), methicillin-resistant S.aureus ATCC 43300 (MIC=25 ug) and B.subtilis ATCC 6633 (MIC=25 ug). Has no activity against fungus C.albicans ATCC 90028. This Odorrana ishikawae (Ishikawa's frog) protein is Esculentin-1SIa.